A 180-amino-acid polypeptide reads, in one-letter code: MTTQLDLIKSSIKSIPNYPKEGIIFRDITTLLEVPAAFKATIDLIVEQYRDKGITKVLGTESRGFIFGAPVALALGLPFELVRKPKKLPRETISQSYQLEYGQDTLEMHVDAISEGDNVLIIDDLLATGGTVEATVKLVQRLGGAVKHAAFVINLPELGGEKRLNNLGVDCYTLVNFEGH.

Belongs to the purine/pyrimidine phosphoribosyltransferase family. As to quaternary structure, homodimer.

It is found in the cytoplasm. It carries out the reaction AMP + diphosphate = 5-phospho-alpha-D-ribose 1-diphosphate + adenine. Its pathway is purine metabolism; AMP biosynthesis via salvage pathway; AMP from adenine: step 1/1. In terms of biological role, catalyzes a salvage reaction resulting in the formation of AMP, that is energically less costly than de novo synthesis. The protein is Adenine phosphoribosyltransferase of Haemophilus influenzae (strain 86-028NP).